An 89-amino-acid chain; its full sequence is Small ribosomal subunit protein uS14 (89 aa).

It belongs to the universal ribosomal protein uS14 family. As to quaternary structure, part of the 30S ribosomal subunit. Contacts proteins S3 and S10.

Functionally, binds 16S rRNA, required for the assembly of 30S particles and may also be responsible for determining the conformation of the 16S rRNA at the A site. This chain is Small ribosomal subunit protein uS14, found in Chlorobium chlorochromatii (strain CaD3).